A 332-amino-acid polypeptide reads, in one-letter code: Fructose-1,6-bisphosphatase class 1 (332 aa).

Positions 89, 110, 112, and 113 each coordinate Mg(2+). Residues 113–116 (DGSS), Asn206, Tyr239, 257–259 (YLY), and Lys269 contribute to the substrate site. Glu275 lines the Mg(2+) pocket.

The protein belongs to the FBPase class 1 family. Homotetramer. It depends on Mg(2+) as a cofactor.

The protein localises to the cytoplasm. It carries out the reaction beta-D-fructose 1,6-bisphosphate + H2O = beta-D-fructose 6-phosphate + phosphate. It participates in carbohydrate biosynthesis; gluconeogenesis. The chain is Fructose-1,6-bisphosphatase class 1 from Salmonella gallinarum (strain 287/91 / NCTC 13346).